Consider the following 154-residue polypeptide: Putative antiporter subunit mnhG2 (154 aa).

Helical transmembrane passes span 11–31, 51–71, and 72–92; these read IASI…IGIV, VLLT…FFSV, and RLLL…HLIS.

It belongs to the CPA3 antiporters (TC 2.A.63) subunit G family. In terms of assembly, may form a heterooligomeric complex that consists of seven subunits: mnhA2, mnhB2, mnhC2, mnhD2, mnhE2, mnhF2 and mnhG2.

The protein localises to the cell membrane. In Staphylococcus epidermidis (strain ATCC 35984 / DSM 28319 / BCRC 17069 / CCUG 31568 / BM 3577 / RP62A), this protein is Putative antiporter subunit mnhG2 (mnhG2).